A 197-amino-acid chain; its full sequence is MASIQNLYETVVGVLGDQASKVISALGEITVECLPEHYISVMTALRDHEELHFELLVDLCGVDYSTYKNEVWQGKRFAVVSQLLSVKNNQRIRVRVWVSDDDFPVVESVVPVYNSADWYEREAFDLYGIMFNNHPDLRRILTDYGFVGHPFRKDFPISGYVEMRYDEEQKRVIYQPVTIEPREITPRIVREENYGGQ.

It belongs to the complex I 30 kDa subunit family. As to quaternary structure, NDH-1 is composed of 14 different subunits. Subunits NuoB, C, D, E, F, and G constitute the peripheral sector of the complex.

The protein localises to the cell inner membrane. The enzyme catalyses a quinone + NADH + 5 H(+)(in) = a quinol + NAD(+) + 4 H(+)(out). In terms of biological role, NDH-1 shuttles electrons from NADH, via FMN and iron-sulfur (Fe-S) centers, to quinones in the respiratory chain. The immediate electron acceptor for the enzyme in this species is believed to be ubiquinone. Couples the redox reaction to proton translocation (for every two electrons transferred, four hydrogen ions are translocated across the cytoplasmic membrane), and thus conserves the redox energy in a proton gradient. This is NADH-quinone oxidoreductase subunit C from Neisseria meningitidis serogroup C (strain 053442).